The primary structure comprises 166 residues: Small ribosomal subunit protein uS5 (166 aa).

The S5 DRBM domain occupies 12 to 75 (YIEKLVQVNR…EAARRNMIQV (64 aa)).

The protein belongs to the universal ribosomal protein uS5 family. Part of the 30S ribosomal subunit. Contacts proteins S4 and S8.

With S4 and S12 plays an important role in translational accuracy. In terms of biological role, located at the back of the 30S subunit body where it stabilizes the conformation of the head with respect to the body. The protein is Small ribosomal subunit protein uS5 of Ectopseudomonas mendocina (strain ymp) (Pseudomonas mendocina).